The chain runs to 233 residues: Demethylmenaquinone methyltransferase (233 aa).

S-adenosyl-L-methionine contacts are provided by residues T60, D81, and 106–107 (DA).

This sequence belongs to the class I-like SAM-binding methyltransferase superfamily. MenG/UbiE family.

It carries out the reaction a 2-demethylmenaquinol + S-adenosyl-L-methionine = a menaquinol + S-adenosyl-L-homocysteine + H(+). It functions in the pathway quinol/quinone metabolism; menaquinone biosynthesis; menaquinol from 1,4-dihydroxy-2-naphthoate: step 2/2. Functionally, methyltransferase required for the conversion of demethylmenaquinol (DMKH2) to menaquinol (MKH2). In Staphylococcus saprophyticus subsp. saprophyticus (strain ATCC 15305 / DSM 20229 / NCIMB 8711 / NCTC 7292 / S-41), this protein is Demethylmenaquinone methyltransferase.